Reading from the N-terminus, the 297-residue chain is ATP synthase F(1) complex subunit gamma, mitochondrial (297 aa).

A mitochondrion-targeting transit peptide spans 1–25 (MFSRAGVAGLSAWTLQPQWIQVRNM). Lys-39 carries the post-translational modification N6-acetyllysine. At Lys-49 the chain carries N6-succinyllysine. Lys-55 bears the N6-acetyllysine mark. Lys-115 carries the post-translational modification N6-acetyllysine; alternate. Lys-115 is modified (N6-succinyllysine; alternate). Position 146 is a phosphoserine (Ser-146). An N6-acetyllysine; alternate modification is found at Lys-154. An N6-succinyllysine; alternate modification is found at Lys-154. Residue Lys-197 is modified to N6-acetyllysine. Lys-270 carries the post-translational modification N6-succinyllysine.

This sequence belongs to the ATPase gamma chain family. Component of the ATP synthase complex composed at least of ATP5F1A/subunit alpha, ATP5F1B/subunit beta, ATP5MC1/subunit c (homooctomer), MT-ATP6/subunit a, MT-ATP8/subunit 8, ATP5ME/subunit e, ATP5MF/subunit f, ATP5MG/subunit g, ATP5MK/subunit k, ATP5MJ/subunit j, ATP5F1C/subunit gamma, ATP5F1D/subunit delta, ATP5F1E/subunit epsilon, ATP5PF/subunit F6, ATP5PB/subunit b, ATP5PD/subunit d, ATP5PO/subunit OSCP. ATP synthase complex consists of a soluble F(1) head domain (subunits alpha(3) and beta(3)) - the catalytic core - and a membrane F(0) domain - the membrane proton channel (subunits c, a, 8, e, f, g, k and j). These two domains are linked by a central stalk (subunits gamma, delta, and epsilon) rotating inside the F1 region and a stationary peripheral stalk (subunits F6, b, d, and OSCP). Interacts with FLVCR2; this interaction occurs in the absence of heme and is disrupted upon heme binding.

It is found in the mitochondrion inner membrane. In terms of biological role, subunit gamma, of the mitochondrial membrane ATP synthase complex (F(1)F(0) ATP synthase or Complex V) that produces ATP from ADP in the presence of a proton gradient across the membrane which is generated by electron transport complexes of the respiratory chain. ATP synthase complex consist of a soluble F(1) head domain - the catalytic core - and a membrane F(1) domain - the membrane proton channel. These two domains are linked by a central stalk rotating inside the F(1) region and a stationary peripheral stalk. During catalysis, ATP synthesis in the catalytic domain of F(1) is coupled via a rotary mechanism of the central stalk subunits to proton translocation. In vivo, can only synthesize ATP although its ATP hydrolase activity can be activated artificially in vitro. With the central stalk subunit delta, is essential for the biogenesis of F(1) catalytic part of the ATP synthase complex namely in the formation of F1 assembly intermediate. The protein is ATP synthase F(1) complex subunit gamma, mitochondrial of Pongo abelii (Sumatran orangutan).